The sequence spans 255 residues: MPLEIVTVPCLSDNYAYLIHDADAGKTALVDAPEAAPIQSELDRRGWSLDQVWLTHHHWDHVDGLAALRDRYKPTVIGAEADAHRLPPLDLAVSEGDRFDLGGAPVEVLDVSGHTVGHIAFHLPTGKAVFTADSLMALGCGRLFEGTPDQMWASLSKLAALPDDTLVCSGHEYTQSNARFALSVDPDNAALKTRAAEIDQARAEGRPTVPSLLSLEKSTNPFLRAADPGIQSLLGMQGADPARVFAEIRARKDHF.

Zn(2+)-binding residues include His-56, His-58, Asp-60, His-61, His-114, Asp-133, and His-171.

This sequence belongs to the metallo-beta-lactamase superfamily. Glyoxalase II family. In terms of assembly, monomer. Zn(2+) serves as cofactor.

The catalysed reaction is an S-(2-hydroxyacyl)glutathione + H2O = a 2-hydroxy carboxylate + glutathione + H(+). It functions in the pathway secondary metabolite metabolism; methylglyoxal degradation; (R)-lactate from methylglyoxal: step 2/2. Functionally, thiolesterase that catalyzes the hydrolysis of S-D-lactoyl-glutathione to form glutathione and D-lactic acid. The protein is Hydroxyacylglutathione hydrolase of Ruegeria pomeroyi (strain ATCC 700808 / DSM 15171 / DSS-3) (Silicibacter pomeroyi).